The primary structure comprises 406 residues: Olfactomedin-like protein 3 (406 aa).

An N-terminal signal peptide occupies residues Met1–Gly21. Positions His25–Asn101 form a coiled coil. The region spanning Asp134–Lys401 is the Olfactomedin-like domain. Cys135 and Cys328 form a disulfide bridge. Asn177 and Asn248 each carry an N-linked (GlcNAc...) asparagine glycan.

Belongs to the OLFML3 family.

The protein localises to the secreted. Its function is as follows. Secreted scaffold protein that plays an essential role in dorsoventral patterning during early development. Stabilizes axial formation by restricting chordin (CHRD) activity on the dorsal side. Acts by facilitating the association between the tolloid proteases and their substrate chordin (CHRD), leading to enhance chordin (CHRD) degradation. May have matrix-related function involved in placental and embryonic development, or play a similar role in other physiological processes. This chain is Olfactomedin-like protein 3 (Olfml3), found in Mus musculus (Mouse).